The following is a 253-amino-acid chain: Large ribosomal subunit protein uL4 (253 aa).

The disordered stretch occupies residues 61–107; it reads GWGSGRGTSHVPRLVNSSRAARVPHARGGRRAHPPKPEADRSEKVNT. The span at 82-94 shows a compositional bias: basic residues; sequence RVPHARGGRRAHP. Basic and acidic residues predominate over residues 95 to 107; the sequence is PKPEADRSEKVNT.

This sequence belongs to the universal ribosomal protein uL4 family. Part of the 50S ribosomal subunit.

In terms of biological role, one of the primary rRNA binding proteins, this protein initially binds near the 5'-end of the 23S rRNA. It is important during the early stages of 50S assembly. It makes multiple contacts with different domains of the 23S rRNA in the assembled 50S subunit and ribosome. Its function is as follows. Forms part of the polypeptide exit tunnel. In Methanosarcina barkeri (strain Fusaro / DSM 804), this protein is Large ribosomal subunit protein uL4.